A 514-amino-acid polypeptide reads, in one-letter code: 1-pyrroline-5-carboxylate dehydrogenase (514 aa).

Catalysis depends on residues glutamate 286 and cysteine 320.

It belongs to the aldehyde dehydrogenase family. RocA subfamily.

It catalyses the reaction L-glutamate 5-semialdehyde + NAD(+) + H2O = L-glutamate + NADH + 2 H(+). It participates in amino-acid degradation; L-proline degradation into L-glutamate; L-glutamate from L-proline: step 2/2. In Staphylococcus haemolyticus (strain JCSC1435), this protein is 1-pyrroline-5-carboxylate dehydrogenase.